The sequence spans 852 residues: Mannosyl-oligosaccharide glucosidase GCS1 (852 aa).

The tract at residues 1 to 31 is disordered; the sequence is MTGASRRSARGRIKSSSLSPGSDEGSAYPPS. Residues 1 to 51 lie on the Cytoplasmic side of the membrane; sequence MTGASRRSARGRIKSSSLSPGSDEGSAYPPSIRRGKGKELVSIGAFKTNLK. The Endoplasmic reticulum targeting signature appears at 6 to 12; sequence RRSARGR. Residues 15–26 are compositionally biased toward low complexity; it reads SSSLSPGSDEGS. Residues 52–72 form a helical; Signal-anchor for type II membrane protein membrane-spanning segment; sequence ILVGLIILGIIVIYFVINRLV. Residues 73–852 lie on the Lumenal side of the membrane; the sequence is RHGLLFDESQ…LIMSEDYPIF (780 aa). The interval 91-150 is required for endoplasmic reticulum targeting; it reads PAPKVMDLSMFQGEHKESLYWGTYRPHVYFGVRARTPLSLVAGLMWLGVKDEMYVMRHFC. N-linked (GlcNAc...) asparagine glycans are attached at residues Asn-282, Asn-552, and Asn-570. Residues 574-583 show a composition bias toward polar residues; the sequence is QELNPKTLSS. Positions 574–593 are disordered; it reads QELNPKTLSSGLDDYPRASH. Asp-586 (proton donor) is an active-site residue. 3 N-linked (GlcNAc...) asparagine glycosylation sites follow: Asn-633, Asn-662, and Asn-730. Residue Glu-819 is the Proton acceptor of the active site.

Belongs to the glycosyl hydrolase 63 family. Constitutively expressed in roots, stems, leaves, flowers and siliques.

The protein resides in the endoplasmic reticulum membrane. The enzyme catalyses N(4)-(alpha-D-Glc-(1-&gt;2)-alpha-D-Glc-(1-&gt;3)-alpha-D-Glc-(1-&gt;3)-alpha-D-Man-(1-&gt;2)-alpha-D-Man-(1-&gt;2)-alpha-D-Man-(1-&gt;3)-[alpha-D-Man-(1-&gt;2)-alpha-D-Man-(1-&gt;3)-[alpha-D-Man-(1-&gt;2)-alpha-D-Man-(1-&gt;6)]-alpha-D-Man-(1-&gt;6)]-beta-D-Man-(1-&gt;4)-beta-D-GlcNAc-(1-&gt;4)-beta-D-GlcNAc)-L-asparaginyl-[protein] + H2O = N(4)-(alpha-D-Glc-(1-&gt;3)-alpha-D-Glc-(1-&gt;3)-alpha-D-Man-(1-&gt;2)-alpha-D-Man-(1-&gt;2)-alpha-D-Man-(1-&gt;3)-[alpha-D-Man-(1-&gt;2)-alpha-D-Man-(1-&gt;3)-[alpha-D-Man-(1-&gt;2)-alpha-D-Man-(1-&gt;6)]-alpha-D-Man-(1-&gt;6)]-beta-D-Man-(1-&gt;4)-beta-D-GlcNAc-(1-&gt;4)-beta-D-GlcNAc)-L-asparaginyl-[protein] + beta-D-glucose. It functions in the pathway glycan metabolism; N-glycan degradation. Cleaves the distal alpha 1,2-linked glucose residue from the Glc(3)Man(9)GlcNAc(2) oligosaccharide precursor. Required for the accumulation of seed storage proteins, the formation of protein bodies, cell differentiation, cellulose biosynthesis and organization (in cell walls), cell shape determination and organization (e.g. epidermal cells), and embryo development. Involved in root development. The sequence is that of Mannosyl-oligosaccharide glucosidase GCS1 (GCS1) from Arabidopsis thaliana (Mouse-ear cress).